Reading from the N-terminus, the 378-residue chain is Dual-specificity RNA methyltransferase RlmN (378 aa).

The active-site Proton acceptor is E97. The region spanning 103–341 (EGDRATLCVS…VMVRKTRGDD (239 aa)) is the Radical SAM core domain. C110 and C346 are oxidised to a cystine. [4Fe-4S] cluster-binding residues include C117, C121, and C124. Residues 171-172 (GE), S203, 225-227 (SLH), and N303 contribute to the S-adenosyl-L-methionine site. C346 (S-methylcysteine intermediate) is an active-site residue.

This sequence belongs to the radical SAM superfamily. RlmN family. It depends on [4Fe-4S] cluster as a cofactor.

Its subcellular location is the cytoplasm. The catalysed reaction is adenosine(2503) in 23S rRNA + 2 reduced [2Fe-2S]-[ferredoxin] + 2 S-adenosyl-L-methionine = 2-methyladenosine(2503) in 23S rRNA + 5'-deoxyadenosine + L-methionine + 2 oxidized [2Fe-2S]-[ferredoxin] + S-adenosyl-L-homocysteine. It carries out the reaction adenosine(37) in tRNA + 2 reduced [2Fe-2S]-[ferredoxin] + 2 S-adenosyl-L-methionine = 2-methyladenosine(37) in tRNA + 5'-deoxyadenosine + L-methionine + 2 oxidized [2Fe-2S]-[ferredoxin] + S-adenosyl-L-homocysteine. In terms of biological role, specifically methylates position 2 of adenine 2503 in 23S rRNA and position 2 of adenine 37 in tRNAs. m2A2503 modification seems to play a crucial role in the proofreading step occurring at the peptidyl transferase center and thus would serve to optimize ribosomal fidelity. The chain is Dual-specificity RNA methyltransferase RlmN from Idiomarina loihiensis (strain ATCC BAA-735 / DSM 15497 / L2-TR).